The primary structure comprises 453 residues: Serine--tRNA ligase (453 aa).

249–251 (TSE) contributes to the L-serine binding site. ATP-binding positions include 280 to 282 (RKE) and valine 296. Glutamate 303 contacts L-serine. 367–370 (EMVS) lines the ATP pocket. Threonine 404 lines the L-serine pocket.

Belongs to the class-II aminoacyl-tRNA synthetase family. Type-1 seryl-tRNA synthetase subfamily. As to quaternary structure, homodimer. The tRNA molecule binds across the dimer.

It is found in the cytoplasm. It catalyses the reaction tRNA(Ser) + L-serine + ATP = L-seryl-tRNA(Ser) + AMP + diphosphate + H(+). The enzyme catalyses tRNA(Sec) + L-serine + ATP = L-seryl-tRNA(Sec) + AMP + diphosphate + H(+). The protein operates within aminoacyl-tRNA biosynthesis; selenocysteinyl-tRNA(Sec) biosynthesis; L-seryl-tRNA(Sec) from L-serine and tRNA(Sec): step 1/1. Catalyzes the attachment of serine to tRNA(Ser). Is also able to aminoacylate tRNA(Sec) with serine, to form the misacylated tRNA L-seryl-tRNA(Sec), which will be further converted into selenocysteinyl-tRNA(Sec). The sequence is that of Serine--tRNA ligase from Archaeoglobus fulgidus (strain ATCC 49558 / DSM 4304 / JCM 9628 / NBRC 100126 / VC-16).